The following is a 216-amino-acid chain: MNLILMGLPGAGKGTQAEQIVAKYNIPHISTGDMFRAAMKAETEMGLQAKSFIDKGALVPDEVTIGIVRERLSQDDCVRGFLLDGFPRTVAQASALEEIMKDLGKKIDYVLNINVDSGLLLKRLTGRRICKECGATYHLEFNPPAKADVCDKCGGELYQRSDDNEETVANRLDVNIKQTKPLLDFYEELGYLQSINGEQDINKVFADIDVLIGGLA.

Residue 10-15 (GAGKGT) participates in ATP binding. The interval 30–59 (STGDMFRAAMKAETEMGLQAKSFIDKGALV) is NMP. Residues Thr-31, Arg-36, 57 to 59 (ALV), 85 to 88 (GFPR), and Gln-92 each bind AMP. Residues 126–163 (GRRICKECGATYHLEFNPPAKADVCDKCGGELYQRSDD) form an LID region. Arg-127 is an ATP binding site. Residues Cys-130 and Cys-133 each contribute to the Zn(2+) site. 136 to 137 (TY) is a binding site for ATP. The Zn(2+) site is built by Cys-150 and Cys-153. Residues Arg-160 and Arg-171 each coordinate AMP. Gln-199 lines the ATP pocket.

Belongs to the adenylate kinase family. Monomer.

Its subcellular location is the cytoplasm. The enzyme catalyses AMP + ATP = 2 ADP. Its pathway is purine metabolism; AMP biosynthesis via salvage pathway; AMP from ADP: step 1/1. Functionally, catalyzes the reversible transfer of the terminal phosphate group between ATP and AMP. Plays an important role in cellular energy homeostasis and in adenine nucleotide metabolism. This is Adenylate kinase from Bacillus cereus (strain B4264).